The chain runs to 75 residues: Parvalbumin beta 3 (75 aa).

At Ala-1 the chain carries N-acetylalanine. Residues 26-61 enclose the EF-hand domain; the sequence is YKAFFAKKAFFVIDQDKSGFIEEDELKLFLQVFSAG. The Ca(2+) site is built by Asp-39, Asp-41, Ser-43, Phe-45, Glu-47, and Glu-50.

This sequence belongs to the parvalbumin family.

In muscle, parvalbumin is thought to be involved in relaxation after contraction. It binds two calcium ions. The protein is Parvalbumin beta 3 of Merluccius gayi (South Pacific hake).